The chain runs to 169 residues: Shikimate kinase (169 aa).

Position 12 to 17 (12 to 17) interacts with ATP; it reads AVGKTT. Thr-16 contributes to the Mg(2+) binding site. Asp-34, Arg-58, and Gly-80 together coordinate substrate. Residue Arg-119 coordinates ATP. Arg-139 provides a ligand contact to substrate. An ATP-binding site is contributed by Arg-156.

Belongs to the shikimate kinase family. Monomer. It depends on Mg(2+) as a cofactor.

Its subcellular location is the cytoplasm. The catalysed reaction is shikimate + ATP = 3-phosphoshikimate + ADP + H(+). It functions in the pathway metabolic intermediate biosynthesis; chorismate biosynthesis; chorismate from D-erythrose 4-phosphate and phosphoenolpyruvate: step 5/7. In terms of biological role, catalyzes the specific phosphorylation of the 3-hydroxyl group of shikimic acid using ATP as a cosubstrate. The sequence is that of Shikimate kinase from Alkaliphilus oremlandii (strain OhILAs) (Clostridium oremlandii (strain OhILAs)).